The sequence spans 148 residues: MGSQGSGGVPLVQAPYTVLLLPLGTSRQDPGAQSFFLWLRRMQALEREQDALWQGLELLQHGQAWFEDHLREAQRQQLHLGALGENFLTDLHSEPGRPPLAQIQKVNICLQNLIHEKELSRQQKGVTQPKEEMAQRGCTKGPRGPTRV.

Residues 120 to 148 (SRQQKGVTQPKEEMAQRGCTKGPRGPTRV) form a disordered region.

The polypeptide is Suppressor APC domain-containing protein 1 (SAPCD1) (Homo sapiens (Human)).